The sequence spans 484 residues: Ectonucleoside triphosphate diphosphohydrolase 6 (484 aa).

The Cytoplasmic segment spans residues 1–39 (MKKGIRYETSRKTSYIFQQPQHGPWQTRMRKISNHGSLR). A helical; Signal-anchor for type II membrane protein membrane pass occupies residues 40–60 (VAKVAYPLGLCVGVFIYVAYI). Residues 61-484 (KWHRATATQA…SLNRQKSPAS (424 aa)) lie on the Lumenal side of the membrane. Residue Asn-220 is glycosylated (N-linked (GlcNAc...) asparagine). Catalysis depends on Glu-224, which acts as the Proton acceptor. N-linked (GlcNAc...) asparagine glycosylation is present at Asn-284. Cystine bridges form between Cys-325–Cys-356 and Cys-416–Cys-430.

The protein belongs to the GDA1/CD39 NTPase family. Monomer. Ca(2+) serves as cofactor. Requires Mg(2+) as cofactor. In terms of processing, the secreted form may be produced by intracellular processing. N-glycosylated. As to expression, expressed in most tissues, but predominantly in heart.

It is found in the golgi apparatus membrane. It localises to the secreted. The protein resides in the cell membrane. The enzyme catalyses a ribonucleoside 5'-diphosphate + H2O = a ribonucleoside 5'-phosphate + phosphate + H(+). It catalyses the reaction IDP + H2O = IMP + phosphate + H(+). It carries out the reaction GDP + H2O = GMP + phosphate + H(+). The catalysed reaction is UDP + H2O = UMP + phosphate + H(+). With respect to regulation, glycosylation does not appear to be required for enzymatic activity. Catalyzes the hydrolysis of nucleoside triphosphates and diphosphates in a calcium- or magnesium-dependent manner. Has a strong preference for nucleoside diphosphates, preferentially hydrolyzes GDP, IDP, and UDP, with slower hydrolysis of CDP, ITP, GTP, CTP, ADP, and UTP and virtually no hydrolysis of ATP. The membrane bound form might support glycosylation reactions in the Golgi apparatus and, when released from cells, might catalyze the hydrolysis of extracellular nucleotides. The chain is Ectonucleoside triphosphate diphosphohydrolase 6 (ENTPD6) from Homo sapiens (Human).